The sequence spans 660 residues: Acetyl-coenzyme A synthetase (660 aa).

Residues 197-200 (RGGK) and T317 contribute to the CoA site. ATP-binding positions include 397 to 399 (GEP), 421 to 426 (DTWWQT), D512, and R528. S536 contributes to the CoA binding site. R539 lines the ATP pocket. V550 and V555 together coordinate Mg(2+). An N6-acetyllysine modification is found at K625.

This sequence belongs to the ATP-dependent AMP-binding enzyme family. Mg(2+) is required as a cofactor. In terms of processing, acetylated. Deacetylation by the SIR2-homolog deacetylase activates the enzyme.

It carries out the reaction acetate + ATP + CoA = acetyl-CoA + AMP + diphosphate. Its function is as follows. Catalyzes the conversion of acetate into acetyl-CoA (AcCoA), an essential intermediate at the junction of anabolic and catabolic pathways. AcsA undergoes a two-step reaction. In the first half reaction, AcsA combines acetate with ATP to form acetyl-adenylate (AcAMP) intermediate. In the second half reaction, it can then transfer the acetyl group from AcAMP to the sulfhydryl group of CoA, forming the product AcCoA. The chain is Acetyl-coenzyme A synthetase from Paraburkholderia phymatum (strain DSM 17167 / CIP 108236 / LMG 21445 / STM815) (Burkholderia phymatum).